Reading from the N-terminus, the 842-residue chain is Xyloglucanase Xgh74A (842 aa).

Residues 1–32 form the signal peptide; the sequence is MVKKFTSKIKAAVFAAVVAATAIFGPAISSQA. The active-site Nucleophile is the Asp70. BNR repeat units follow at residues 134 to 144, 185 to 196, 252 to 262, and 358 to 368; these read RSTDRGETWEK, WRSTDYGVTWSK, YRSTDGGVTWK, and FRSTDGGATWK. Asp480 acts as the Proton donor in catalysis. BNR repeat units lie at residues 533 to 541, 577 to 586, 616 to 626, 660 to 671, and 708 to 718; these read FSYDGGRNW, VTTDNGNSWK, YISTDGGLTFT, WRSTDGGYTFEK, and FRSDDAGKTWV. The Dockerin domain maps to 771-841; it reads DKGLVGDLNG…LLQAIPELPK (71 aa).

It belongs to the glycosyl hydrolase 74 family.

Functionally, hydrolyzes the glucosidic bonds of unbranched Glc residues in tamarind seed xyloglucan, producing XXXG, XLXG, XXLG and XLLG. Has low activity on carboxymethylcellulose, lichenan,hydroxyethylcellulose and glucuronoxylan, and no activity on xylan, polygalaturonic acid, wheat arabinoxylan, rhamnogalacturan, curdlan, laminarin, galactomannan, galactan, arabinan and pachyman or amorphous cellulose. The protein is Xyloglucanase Xgh74A of Acetivibrio thermocellus (Hungateiclostridium thermocellum).